Consider the following 152-residue polypeptide: uncharacterized protein (152 aa).

This is an uncharacterized protein from Methanocaldococcus jannaschii (strain ATCC 43067 / DSM 2661 / JAL-1 / JCM 10045 / NBRC 100440) (Methanococcus jannaschii).